Here is a 444-residue protein sequence, read N- to C-terminus: Putative methylesterase 15, chloroplastic (444 aa).

Polar residues predominate over residues 1-27 (MGNSLRCISQEQDPNQKKPSSVVNGNS). Disordered regions lie at residues 1-36 (MGNS…RRLS) and 48-91 (PSLS…DSLI). Residues 1–58 (MGNSLRCISQEQDPNQKKPSSVVNGNSSEKHVRRLSLIPSFRRRTLLPSLSCSGSSTS) constitute a chloroplast transit peptide. The span at 53–63 (SGSSTSSTSKK) shows a compositional bias: low complexity. A compositionally biased stretch (basic residues) spans 64–80 (GGIKTKKKIRERHHQEQ). A compositionally biased stretch (basic and acidic residues) spans 81-90 (HHHDHEKDSL). In terms of domain architecture, AB hydrolase-1 spans 188–312 (FVLVHGGGFG…QPDSNYDLME (125 aa)). The Acyl-ester intermediate role is filled by Asp262. Residues Asp390 and His418 each act as charge relay system in the active site.

The protein belongs to the AB hydrolase superfamily. Methylesterase family.

The protein localises to the plastid. The protein resides in the chloroplast. Functionally, putative methylesterase. In Arabidopsis thaliana (Mouse-ear cress), this protein is Putative methylesterase 15, chloroplastic.